Consider the following 387-residue polypeptide: MKDVVIVDCIRTPMGRSKGGAFRNVRAEDLSAHLMSSILLRNPNLDPNEIEDIYWGCVQQTLEQGFNIARNAALLAGIPKQVGAVTVNRLCGSSMQALHDASRAIQVGDGDIFIIGGVEHMGHVPMSHGVDFHPGMAKSVAKASGMMGLTAEMLGKLHGISRQQQDEFAARSHRRAYAATVEGRFAREIVGLEGHDASGARFFYDYDEVIRPETTVETLSQLRPVFDPVNGTVTAGTSSALSDGASAMLVMSADRAKALGLTPRVRVRSMAVAGCDAAIMGYGPVPATQKALKRAGLTIGDIDLVELNEAFAAQSLPCVKDLGLLDVAEEKVNLNGGAIALGHPLGCSGSRISTTLIHLMEEKDANLGLATMCIGLGQGIATVFERV.

C91 serves as the catalytic Acyl-thioester intermediate. Catalysis depends on proton acceptor residues H343 and C373.

The protein belongs to the thiolase-like superfamily. Thiolase family. Heterotetramer of two alpha chains (FadB) and two beta chains (FadA).

The protein localises to the cytoplasm. It catalyses the reaction an acyl-CoA + acetyl-CoA = a 3-oxoacyl-CoA + CoA. Its pathway is lipid metabolism; fatty acid beta-oxidation. Functionally, catalyzes the final step of fatty acid oxidation in which acetyl-CoA is released and the CoA ester of a fatty acid two carbons shorter is formed. The protein is 3-ketoacyl-CoA thiolase of Aeromonas salmonicida (strain A449).